Here is a 293-residue protein sequence, read N- to C-terminus: Eukaryotic translation initiation factor 3 subunit F (293 aa).

Ala2 is modified (N-acetylalanine). The region spanning 28-159 (ARIHPLVIFN…IKAFVSSNLS (132 aa)) is the MPN domain.

This sequence belongs to the eIF-3 subunit F family. Component of the eukaryotic translation initiation factor 3 (eIF-3) complex. Binds to TIF3E1 and TIF3H1. In terms of tissue distribution, expressed in inflorescences, leaves, stems, siliques, roots and seedlings. Accumulates at highly levels in pollen grains, developing embryos and root tips.

The protein localises to the cytoplasm. Component of the eukaryotic translation initiation factor 3 (eIF-3) complex, which is involved in protein synthesis of a specialized repertoire of mRNAs and, together with other initiation factors, stimulates binding of mRNA and methionyl-tRNAi to the 40S ribosome. The eIF-3 complex specifically targets and initiates translation of a subset of mRNAs involved in cell proliferation (Potential). Involved in cell growth and differentiation, especially during embryogenesis and male gametophyte germination. Regulates sensitivity to sugars (e.g. sucrose). The chain is Eukaryotic translation initiation factor 3 subunit F (TIF3F1) from Arabidopsis thaliana (Mouse-ear cress).